We begin with the raw amino-acid sequence, 647 residues long: Replication protein E1 (647 aa).

Positions 86–88 (KRK) match the Nuclear localization signal motif. A Phosphoserine; by host modification is found at Ser-92. The interval 154-186 (TNGDAEGEHGGSVREECSSVDSAIDSENQDPKS) is disordered. Positions 159–170 (EGEHGGSVREEC) are enriched in basic and acidic residues. A DNA-binding region region spans residues 183 to 349 (DPKSPTAQIK…LTVIQHGIDD (167 aa)). The region spanning 448–598 (IEFISFLCAL…FPFDQNRNPV (151 aa)) is the SF3 helicase domain. An ATP-binding site is contributed by 474–481 (GPANTGKS). A Glycyl lysine isopeptide (Lys-Gly) (interchain with G-Cter in SUMO) cross-link involves residue Lys-555.

Belongs to the papillomaviridae E1 protein family. Can form hexamers. Interacts with E2 protein; this interaction increases E1 DNA binding specificity. Interacts with host DNA polymerase subunit POLA2. Interacts with host single stranded DNA-binding protein RPA1. Interacts with host TOP1; this interaction stimulates the enzymatic activity of TOP1. Post-translationally, phosphorylated. Sumoylated.

Its subcellular location is the host nucleus. The enzyme catalyses Couples ATP hydrolysis with the unwinding of duplex DNA by translocating in the 3'-5' direction.. It catalyses the reaction ATP + H2O = ADP + phosphate + H(+). Its function is as follows. ATP-dependent DNA 3'-5' helicase required for initiation of viral DNA replication. It forms a complex with the viral E2 protein. The E1-E2 complex binds to the replication origin which contains binding sites for both proteins. During the initial step, a dimer of E1 interacts with a dimer of protein E2 leading to a complex that binds the viral origin of replication with high specificity. Then, a second dimer of E1 displaces the E2 dimer in an ATP-dependent manner to form the E1 tetramer. Following this, two E1 monomers are added to each half of the site, which results in the formation of two E1 trimers on the viral ori. Subsequently, two hexamers will be created. The double hexamer acts as a bi-directional helicase machinery and unwinds the viral DNA and then recruits the host DNA polymerase to start replication. This Human papillomavirus 39 protein is Replication protein E1.